We begin with the raw amino-acid sequence, 184 residues long: Probable RNA 2'-phosphotransferase (184 aa).

Belongs to the KptA/TPT1 family.

In terms of biological role, removes the 2'-phosphate from RNA via an intermediate in which the phosphate is ADP-ribosylated by NAD followed by a presumed transesterification to release the RNA and generate ADP-ribose 1''-2''-cyclic phosphate (APPR&gt;P). May function as an ADP-ribosylase. The sequence is that of Probable RNA 2'-phosphotransferase from Escherichia coli O139:H28 (strain E24377A / ETEC).